The sequence spans 644 residues: Macrolide export ATP-binding/permease protein MacB (644 aa).

Residues 6–244 enclose the ABC transporter domain; the sequence is LELDGVWRRF…SQATEAQPDG (239 aa). ATP is bound at residue 42 to 49; it reads GASGSGKS. The next 5 membrane-spanning stretches (helical) occupy residues 271–291, 415–435, 517–537, 574–594, and 609–629; these read ALTM…IAIG, EAVG…GVVA, LSLL…IGVM, LVCL…SFVF, and VIAL…FLPA.

This sequence belongs to the ABC transporter superfamily. Macrolide exporter (TC 3.A.1.122) family. Homodimer.

Its subcellular location is the cell inner membrane. Functionally, non-canonical ABC transporter that contains transmembrane domains (TMD), which form a pore in the inner membrane, and an ATP-binding domain (NBD), which is responsible for energy generation. Confers resistance against macrolides. This Chromobacterium violaceum (strain ATCC 12472 / DSM 30191 / JCM 1249 / CCUG 213 / NBRC 12614 / NCIMB 9131 / NCTC 9757 / MK) protein is Macrolide export ATP-binding/permease protein MacB.